The primary structure comprises 654 residues: MCQEGLFRLALSSPRKQTACSLGERRTLAEALGLVDSTLESRRDPNSSLQKEFPQHQDEDQSRAAAPQDCLLRDVECIAQKLEASLEEIHRGAREPREEREQRTLGDALENARLEIEKLKDNLMKLKESGTTDLQRAREHNQRLDEEILALRNRVRSLDSEKKVLGEMYLTSGEKTSCQHQGELRELRQNLRRLQILCNSAEKELRYERGRSLDLKQHNSLLQEENIKIKIELKQAQEKLLDNARLHSSLTAEWKHCQQKVKELELEGLRQTQSLKSQQGLQEKLAREKSKAAEAQEKILDLQQKLDHGRQVCLSDVCILRKKQLEEEIKEAKSIEARLQQQCQEEQQRRILLDQDINELQTQVRALQDKEEQQEAVNSQQQEALRKQLERERRKCEEYVKSNQELSEKLSNLQQEKEALWQEHGRFLEQLGDHVRNYKDKHHCHKAKLQKVKDRLTHELEIRNKRIKELEDETGKLQQKIEMEKVFQGQIMAQNDILLLEKRKLLEQVTDQEELICSSKCTISAFQSKASLLDKENQQLQENCLRLMQQIGLLEQIIRSIQIRREEETVITDNAAFEILKKILPLQNSSFSGTGFVLSAENLQETELHKWEGAAAIPKSPEPLSRSQDSESGYINVTSLKETHNTQGDQKPEL.

Residues 38–65 form a disordered region; it reads TLESRRDPNSSLQKEFPQHQDEDQSRAA. A compositionally biased stretch (basic and acidic residues) spans 53–62; the sequence is FPQHQDEDQS. Coiled coils occupy residues 97 to 244 and 276 to 559; these read REER…LDNA and KSQQ…QIIR. A disordered region spans residues 614-654; the sequence is AAAIPKSPEPLSRSQDSESGYINVTSLKETHNTQGDQKPEL. Over residues 625–654 the composition is skewed to polar residues; it reads SRSQDSESGYINVTSLKETHNTQGDQKPEL.

The protein belongs to the prefoldin subunit beta family.

This chain is Coiled-coil domain-containing protein 30 (Ccdc30), found in Mus musculus (Mouse).